Here is a 228-residue protein sequence, read N- to C-terminus: Early nodulin-like protein 18 (228 aa).

An N-terminal signal peptide occupies residues 1–26 (MSPSCSSCVNVLLIMCLMLLSLSADA). Positions 28-148 (KNYTVGESTG…GQHFMINVTH (121 aa)) constitute a Phytocyanin domain. N-linked (GlcNAc...) asparagine glycans are attached at residues asparagine 29, asparagine 71, asparagine 94, and asparagine 145. A disulfide bond links cysteine 86 and cysteine 136. A disordered region spans residues 148–211 (HGQGLPDSSS…VHSKKSSSST (64 aa)). Over residues 153-170 (PDSSSPDDAAAPGPSESS) the composition is skewed to low complexity. The segment covering 188–204 (DHPKDIESADDDKEVHS) has biased composition (basic and acidic residues). A lipid anchor (GPI-anchor amidated serine) is attached at serine 204. The propeptide at 205-228 (KKSSSSTTKTSLFCFVFMGLFASF) is removed in mature form.

It belongs to the early nodulin-like (ENODL) family. In terms of tissue distribution, mostly expressed in seedlings, roots and flowers, and, to a lower extent, in leaves, stems and seeds.

It localises to the cell membrane. May act as a carbohydrate transporter. The sequence is that of Early nodulin-like protein 18 from Arabidopsis thaliana (Mouse-ear cress).